Consider the following 535-residue polypeptide: Triacylglyceride transporter MHAS_02168/C731_2106 (535 aa).

Residues 1 to 18 are Cytoplasmic-facing; that stretch reads MAFPQTPNRLIRPRRTSR. Residues 19–39 form a helical membrane-spanning segment; the sequence is GIAISAGGLAVLLGALDTYVV. Topologically, residues 40–60 are periplasmic; that stretch reads VSIVTDIMRDVGIAVNQIQRV. The helical transmembrane segment at 61 to 82 threads the bilayer; it reads TPIITGYLLGYIAAMPLLGRAS. Residues 83–86 are Cytoplasmic-facing; that stretch reads DRFG. Residues 87 to 107 traverse the membrane as a helical segment; the sequence is RKLLIQISLAGFALGSVITAL. At 108-111 the chain is on the periplasmic side; sequence ATNL. The helical transmembrane segment at 112–136 threads the bilayer; it reads DVLVAGRVIQGAASGALLPVTLALA. Residues 137–145 are Cytoplasmic-facing; sequence ADLWATHKR. A helical transmembrane segment spans residues 146 to 167; that stretch reads AAVLGGVGAAQELGAVLGPIYG. Residues 168–177 are Periplasmic-facing; that stretch reads IFVVWLFHHW. A helical transmembrane segment spans residues 178 to 198; it reads QAVFWVNVPLALIAMVLIHIS. The Cytoplasmic portion of the chain corresponds to 199-212; the sequence is LPPRVRTEEPQRVD. Residues 213 to 230 traverse the membrane as a helical segment; it reads VTGGLLLALALGLATIGL. Residues 231–243 are Periplasmic-facing; the sequence is YNAEPDGKQVLPE. Residues 244 to 263 traverse the membrane as a helical segment; it reads YGPPLIIGAVIAAVAFLVWE. Residues 264 to 278 lie on the Cytoplasmic side of the membrane; sequence RFARTRLLDPAGVRF. The helical transmembrane segment at 279–300 threads the bilayer; sequence RPFLIALLVSLVTGGALMVTLV. Residues 301–320 lie on the Periplasmic side of the membrane; that stretch reads NVELFGQGVLGLDQDEAVFL. Transmembrane regions (helical) follow at residues 321-343 and 344-364; these read LARF…TRVG and DRAV…LIAQ. Over 365 to 384 the chain is Periplasmic; that stretch reads WPADVLESRHDLGFVSLPTL. Positions 373 to 382 are beta-hairpin; sequence RHDLGFVSLP. Residues 385-407 traverse the membrane as a helical segment; it reads DTDLAIAGFGLGLVIAPLTSAAL. The Cytoplasmic segment spans residues 408–415; the sequence is RVVPAAQH. Residues 416-440 traverse the membrane as a helical segment; the sequence is GIASAAVVVARMIGMLIGIAALSAW. The Periplasmic segment spans residues 441-487; the sequence is GLYRFNQYLKEQLAALPPAPADFPGGQMAGQMMRLRTATVQAYVLQY. A helical membrane pass occupies residues 488-507; that stretch reads GEIFAITAGLCVFGAVLGLF. The Cytoplasmic segment spans residues 508–535; it reads IAGRREHAEESADAVDGVSNARDRAPSA.

It belongs to the major facilitator superfamily. P55 (TC 2.A.1.3.34) family.

The protein resides in the cell inner membrane. In association with lipoprotein LprG transports triacylglycerides (TAG) across the inner cell membrane, probably transfering them to lipoprotein LprG in the periplasm. TAG probably regulates lipid metabolism and growth regulation and plays a structural role in the outer membrane. Mutagenesis and molecular modeling suggests TAG (and maybe other lipids) enters the central cavity of the P55 transporter from within the cell inner membrane via clefts on the cytoplasmic face of P55 between TM5-TM8 and TM2-TM11. From there the lipid is probably transferred to the hydrophobic cavity of LprG. The lprG-MHAS_02167/C731_2107 operon complements the vancomycin sensitivity of an M.smegmatis knockout of the same operon. Probably required with LprG for normal surface localization of lipoarabinomannan (LAM). The chain is Triacylglyceride transporter MHAS_02168/C731_2106 from Mycolicibacterium hassiacum (strain DSM 44199 / CIP 105218 / JCM 12690 / 3849) (Mycobacterium hassiacum).